A 671-amino-acid chain; its full sequence is cGMP-dependent protein kinase 1 (671 aa).

Ser-2 bears the N-acetylserine mark. A coiled-coil region spans residues 2 to 59; the sequence is SELEEDFAKILMLKEERIKELEKRLSEKEEEIQELKRKLHKCQSVLPVPSTHIGPRTT. Positions 2–102 are required for dimerization; the sequence is SELEEDFAKI…LIKEAILDND (101 aa). The leucine-zipper stretch occupies residues 9-44; sequence AKILMLKEERIKELEKRLSEKEEEIQELKRKLHKCQ. Residues 50 to 75 form an autoinhibitory domain region; the sequence is PSTHIGPRTTRAQGISAEPQTYRSFH. Thr-59 is modified (phosphothreonine; by autocatalysis). Residues 103 to 220 are cGMP-binding, high affinity; that stretch reads FMKNLELSQI…EYMEFLKSVP (118 aa). 3',5'-cyclic AMP-binding positions include 167–170 and 177–178; these read GELA and RT. Residues 167-170, 177-178, Arg-282, 291-294, 301-302, and Tyr-336 contribute to the 3',5'-cyclic GMP site; these read GELA, RT, and GEKA. The cGMP-binding, low affinity stretch occupies residues 221 to 341; that stretch reads TFQSLPEEIL…SNKAYEDAEA (121 aa). The Protein kinase domain maps to 360-619; the sequence is FNIIDTLGVG…VKDIQKHKWF (260 aa). ATP is bound by residues 366–374 and Lys-390; that span reads LGVGGFGRV. Asp-484 serves as the catalytic Proton acceptor. Thr-515 is modified (phosphothreonine). Residues 620–671 form the AGC-kinase C-terminal domain; that stretch reads EGFNWEGLRKGTLTPPIIPSVASPTDTSNFDSFPEDNDEPPPDDNSGWDIDF. The tract at residues 635–671 is disordered; that stretch reads PIIPSVASPTDTSNFDSFPEDNDEPPPDDNSGWDIDF. Over residues 652–661 the composition is skewed to acidic residues; that stretch reads FPEDNDEPPP.

This sequence belongs to the protein kinase superfamily. AGC Ser/Thr protein kinase family. cGMP subfamily. Isoform alpha: parallel homodimer or heterodimer and also heterotetramer. Interacts directly with PPP1R12A. Non-covalent dimer of dimer of PRKG1-PRKG1 and PPP1R12A-PPP1R12A. This interaction targets PRKG1 to stress fibers to mediate smooth muscle cell relaxation and vasodilation in responses to rises in cGMP. Isoform beta: antiparallel homodimer. Part of cGMP kinase signaling complex at least composed of ACTA2/alpha-actin, CNN1/calponin H1, PLN/phospholamban, PRKG1 and ITPR1. Interacts with IRAG1. Forms a stable complex with ITPR1, IRAG1, and isoform beta of PRKG1. Interacts with TRPC7 (via ankyrin repeat domain). Isoform alpha interacts with RGS2. Interacts with GTF2I. In terms of processing, autophosphorylation increases kinase activity. 65 kDa monomer is produced by proteolytic cleavage. In terms of tissue distribution, high concentrations are detected in various smooth muscle: lung, rumen, trachea, aorta, uterus and stomach. Isoform alpha is expressed predominantly in heart, cerebellum and lung, whereas the beta isoform is expressed in high concentrations in trachea, aorta, stomach and uterus.

It localises to the cytoplasm. It catalyses the reaction L-seryl-[protein] + ATP = O-phospho-L-seryl-[protein] + ADP + H(+). The catalysed reaction is L-threonyl-[protein] + ATP = O-phospho-L-threonyl-[protein] + ADP + H(+). Its activity is regulated as follows. In the absence of cGMP, PRKG1 activity is suppressed by autoinhibitory contacts. Functionally, serine/threonine protein kinase that acts as a key mediator of the nitric oxide (NO)/cGMP signaling pathway. GMP binding activates PRKG1, which phosphorylates serines and threonines on many cellular proteins. Numerous protein targets for PRKG1 phosphorylation are implicated in modulating cellular calcium, but the contribution of each of these targets may vary substantially among cell types. Proteins that are phosphorylated by PRKG1 regulate platelet activation and adhesion, smooth muscle contraction, cardiac function, gene expression, feedback of the NO-signaling pathway, and other processes involved in several aspects of the CNS like axon guidance, hippocampal and cerebellar learning, circadian rhythm and nociception. Smooth muscle relaxation is mediated through lowering of intracellular free calcium, by desensitization of contractile proteins to calcium, and by decrease in the contractile state of smooth muscle or in platelet activation. Regulates intracellular calcium levels via several pathways: phosphorylates IRAG1 and inhibits IP3-induced Ca(2+) release from intracellular stores, phosphorylation of KCNMA1 (BKCa) channels decreases intracellular Ca(2+) levels, which leads to increased opening of this channel. PRKG1 phosphorylates the canonical transient receptor potential channel (TRPC) family which inactivates the associated inward calcium current. Another mode of action of NO/cGMP/PKGI signaling involves PKGI-mediated inactivation of the Ras homolog gene family member A (RhoA). Phosphorylation of RHOA by PRKG1 blocks the action of this protein in myriad processes: regulation of RHOA translocation; decreasing contraction; controlling vesicle trafficking, reduction of myosin light chain phosphorylation resulting in vasorelaxation. Activation of PRKG1 by NO signaling also alters gene expression in a number of tissues. In smooth muscle cells, increased cGMP and PRKG1 activity influence expression of smooth muscle-specific contractile proteins, levels of proteins in the NO/cGMP signaling pathway, down-regulation of the matrix proteins osteopontin and thrombospondin-1 to limit smooth muscle cell migration and phenotype. Regulates vasodilator-stimulated phosphoprotein (VASP) functions in platelets and smooth muscle. This is cGMP-dependent protein kinase 1 (PRKG1) from Bos taurus (Bovine).